Here is a 62-residue protein sequence, read N- to C-terminus: Teretoxin Tan1.1 (62 aa).

An N-terminal signal peptide occupies residues 1-21; the sequence is MSCFPVLFVMMLLVSQSVWAF. A propeptide spanning residues 22 to 38 is cleaved from the precursor; that stretch reads PGPETRDGSVQDAESRR.

The protein belongs to the teretoxin A (TA) superfamily. In terms of processing, contains 2 disulfide bonds. As to expression, expressed by the venom duct.

Its subcellular location is the secreted. The polypeptide is Teretoxin Tan1.1 (Terebra anilis (Auger snail)).